Here is a 263-residue protein sequence, read N- to C-terminus: Formamidopyrimidine-DNA glycosylase (263 aa).

The Schiff-base intermediate with DNA role is filled by proline 2. The active-site Proton donor is the glutamate 3. The Proton donor; for beta-elimination activity role is filled by lysine 59. DNA contacts are provided by histidine 93 and arginine 111. The FPG-type zinc-finger motif lies at 229-263 (KVYGKNGSLCVRCNNVLIRERHAGRSTHYCPHCQK). Arginine 253 acts as the Proton donor; for delta-elimination activity in catalysis.

It belongs to the FPG family. As to quaternary structure, monomer. It depends on Zn(2+) as a cofactor.

The catalysed reaction is Hydrolysis of DNA containing ring-opened 7-methylguanine residues, releasing 2,6-diamino-4-hydroxy-5-(N-methyl)formamidopyrimidine.. It carries out the reaction 2'-deoxyribonucleotide-(2'-deoxyribose 5'-phosphate)-2'-deoxyribonucleotide-DNA = a 3'-end 2'-deoxyribonucleotide-(2,3-dehydro-2,3-deoxyribose 5'-phosphate)-DNA + a 5'-end 5'-phospho-2'-deoxyribonucleoside-DNA + H(+). Involved in base excision repair of DNA damaged by oxidation or by mutagenic agents. Acts as a DNA glycosylase that recognizes and removes damaged bases. Has a preference for oxidized purines, such as 7,8-dihydro-8-oxoguanine (8-oxoG). Has AP (apurinic/apyrimidinic) lyase activity and introduces nicks in the DNA strand. Cleaves the DNA backbone by beta-delta elimination to generate a single-strand break at the site of the removed base with both 3'- and 5'-phosphates. This is Formamidopyrimidine-DNA glycosylase from Carboxydothermus hydrogenoformans (strain ATCC BAA-161 / DSM 6008 / Z-2901).